Reading from the N-terminus, the 309-residue chain is Malate dehydrogenase (309 aa).

Residues 8 to 13 (GAGLVG) and Asp33 each bind NAD(+). Arg82 and Arg88 together coordinate substrate. NAD(+) is bound by residues Asn95 and 118 to 120 (VSN). Substrate is bound by residues Asn120 and Arg151. The Proton acceptor role is filled by His175.

This sequence belongs to the LDH/MDH superfamily. MDH type 3 family.

It catalyses the reaction (S)-malate + NAD(+) = oxaloacetate + NADH + H(+). Functionally, catalyzes the reversible oxidation of malate to oxaloacetate. This is Malate dehydrogenase from Pseudomonas putida (strain ATCC 700007 / DSM 6899 / JCM 31910 / BCRC 17059 / LMG 24140 / F1).